Consider the following 651-residue polypeptide: Aspartate--tRNA ligase, mitochondrial (651 aa).

A mitochondrion-targeting transit peptide spans 1-44; sequence MFCWLSRLCGELSTPTRRTTQLIWSSAARSMVLSSQRIPELSSF. Threonine 216 carries the post-translational modification Phosphothreonine. A Phosphoserine modification is found at serine 239. Residues 241 to 244 form an aspartate region; that stretch reads QQFK. Arginine 263 provides a ligand contact to L-aspartate. Position 263 to 265 (263 to 265) interacts with ATP; that stretch reads RDE. At lysine 379 the chain carries N6-acetyllysine. Residue glutamate 532 participates in ATP binding. Arginine 539 contributes to the L-aspartate binding site. 581 to 584 contacts ATP; it reads GLDR.

Belongs to the class-II aminoacyl-tRNA synthetase family. Type 1 subfamily. Homodimer.

It is found in the mitochondrion matrix. It localises to the mitochondrion membrane. The enzyme catalyses tRNA(Asp) + L-aspartate + ATP = L-aspartyl-tRNA(Asp) + AMP + diphosphate. Catalyzes the attachment of aspartate to tRNA(Asp) in a two-step reaction: aspartate is first activated by ATP to form Asp-AMP and then transferred to the acceptor end of tRNA(Asp). This Bos taurus (Bovine) protein is Aspartate--tRNA ligase, mitochondrial (DARS2).